We begin with the raw amino-acid sequence, 407 residues long: MTYETLLERFLNYVKINTRSNPASTTTPSTKSQADFALTVLKPEMEAIGLQDIHYNPANGYLIGSLPANSSKLTRKIGFIAHMDTADFNAEGVAPQIIESYQGGEIKLGQSGYSLCPEDFPNLNQYLGQTLITTDGTTLLGADDKSGIAEIMTAIEFLVANPQIEHCDIKVAFGPDEEIGVGADKFDVNAFDVDFAYTIDGGPLGELQYETFSAAALELKVLGRNVHPGTAKNQMINALQLAMDFHSQLPVDDRPEKTDGYQGFYHLHSMSGTVEEAQASYIIRDFEDSSFEARKAFVTQLAEEMNSQLGAERVFVTVTDQYYNMKKVIEKDMTPVNLAKAVMEDLAIKPVIEPIRGGTDGSKISFMGIPTPNIFAGGENMHGRFEFVSLQTMEKAVDVILGIVQKA.

His-82 is a Zn(2+) binding site. Residue Asp-84 is part of the active site. Asp-143 contributes to the Zn(2+) binding site. Glu-177 acts as the Proton acceptor in catalysis. Zn(2+) is bound by residues Glu-178, Asp-200, and His-382.

This sequence belongs to the peptidase M20B family. Zn(2+) serves as cofactor.

It localises to the cytoplasm. The enzyme catalyses Release of the N-terminal residue from a tripeptide.. Functionally, cleaves the N-terminal amino acid of tripeptides. This is Peptidase T from Streptococcus equi subsp. equi (strain 4047).